Here is a 1884-residue protein sequence, read N- to C-terminus: Fatty acid synthase subunit alpha (1884 aa).

Positions 91–141 (TPDPAEPPAAEEPKAETGKESAPAASAAAAAATQPAAAVAPPPQSAGPVES) are disordered. The segment covering 111 to 129 (SAPAASAAAAAATQPAAAV) has biased composition (low complexity). Positions 147–222 (VKASLLIHVL…EQFQDTFSGS (76 aa)) constitute a Carrier domain. S182 is subject to O-(pantetheine 4'-phosphoryl)serine. The tract at residues 583 to 613 (TEQTTQDALAIPTGSNTPTEEDELSTASDDD) is disordered. Residues 584–600 (EQTTQDALAIPTGSNTP) show a composition bias toward polar residues. Acidic residues predominate over residues 601–613 (TEEDELSTASDDD). The tract at residues 677-873 (DKYVLVTGAG…CGAIIGWTRG (197 aa)) is beta-ketoacyl reductase. The Ketosynthase family 3 (KS3) domain occupies 1120–1660 (IQEVVIQHDL…QKGAQAVVVH (541 aa)). Residues C1303, H1545, and H1586 each act as for beta-ketoacyl synthase activity in the active site. Positions 1770, 1771, and 1772 each coordinate Mg(2+). Residues 1770 to 1772 (DVE), Y1796, S1806, 1815 to 1825 (EATFKALGVSS), 1839 to 1842 (RDGN), and 1869 to 1871 (ISH) each bind acetyl-CoA. Mg(2+) contacts are provided by S1870 and H1871.

The protein belongs to the thiolase-like superfamily. Fungal fatty acid synthetase subunit alpha family. Fatty acid synthase is composed of alpha and beta subunits.

It catalyses the reaction acetyl-CoA + n malonyl-CoA + 2n NADPH + 4n H(+) = a long-chain-acyl-CoA + n CoA + n CO2 + 2n NADP(+).. The enzyme catalyses a fatty acyl-[ACP] + malonyl-[ACP] + H(+) = a 3-oxoacyl-[ACP] + holo-[ACP] + CO2. The catalysed reaction is a (3R)-hydroxyacyl-[ACP] + NADP(+) = a 3-oxoacyl-[ACP] + NADPH + H(+). Its function is as follows. Fatty acid synthetase catalyzes the formation of long-chain fatty acids from acetyl-CoA, malonyl-CoA and NADPH. The alpha subunit contains domains for: acyl carrier protein, 3-oxoacyl-[acyl-carrier-protein] reductase, and 3-oxoacyl-[acyl-carrier-protein] synthase. This chain is Fatty acid synthase subunit alpha (FAS2), found in Candida parapsilosis (strain CDC 317 / ATCC MYA-4646) (Yeast).